The following is a 158-amino-acid chain: Arginine repressor (158 aa).

This sequence belongs to the ArgR family.

It localises to the cytoplasm. Its pathway is amino-acid biosynthesis; L-arginine biosynthesis [regulation]. Functionally, regulates arginine biosynthesis genes. This is Arginine repressor from Anaeromyxobacter sp. (strain Fw109-5).